The sequence spans 156 residues: 6,7-dimethyl-8-ribityllumazine synthase (156 aa).

Residues F22, 56–58 (AFE), and 80–82 (AVI) contribute to the 5-amino-6-(D-ribitylamino)uracil site. Position 85 to 86 (85 to 86 (ST)) interacts with (2S)-2-hydroxy-3-oxobutyl phosphate. H88 serves as the catalytic Proton donor. F113 contacts 5-amino-6-(D-ribitylamino)uracil. Position 127 (R127) interacts with (2S)-2-hydroxy-3-oxobutyl phosphate.

Belongs to the DMRL synthase family.

The catalysed reaction is (2S)-2-hydroxy-3-oxobutyl phosphate + 5-amino-6-(D-ribitylamino)uracil = 6,7-dimethyl-8-(1-D-ribityl)lumazine + phosphate + 2 H2O + H(+). Its pathway is cofactor biosynthesis; riboflavin biosynthesis; riboflavin from 2-hydroxy-3-oxobutyl phosphate and 5-amino-6-(D-ribitylamino)uracil: step 1/2. Its function is as follows. Catalyzes the formation of 6,7-dimethyl-8-ribityllumazine by condensation of 5-amino-6-(D-ribitylamino)uracil with 3,4-dihydroxy-2-butanone 4-phosphate. This is the penultimate step in the biosynthesis of riboflavin. In Caldicellulosiruptor saccharolyticus (strain ATCC 43494 / DSM 8903 / Tp8T 6331), this protein is 6,7-dimethyl-8-ribityllumazine synthase.